A 363-amino-acid polypeptide reads, in one-letter code: Peptide chain release factor 1 (363 aa).

Q237 bears the N5-methylglutamine mark. A compositionally biased stretch (basic and acidic residues) spans 287-299; sequence EQHKEQASTRKEL. The segment at 287–306 is disordered; it reads EQHKEQASTRKELIGSGDRS.

The protein belongs to the prokaryotic/mitochondrial release factor family. Methylated by PrmC. Methylation increases the termination efficiency of RF1.

It localises to the cytoplasm. Peptide chain release factor 1 directs the termination of translation in response to the peptide chain termination codons UAG and UAA. This is Peptide chain release factor 1 from Ruthia magnifica subsp. Calyptogena magnifica.